The chain runs to 3051 residues: Biorientation of chromosomes in cell division protein 1-like 1 (3051 aa).

Pro residues predominate over residues 1–33; that stretch reads MATNPQPQPPPPAPPPPPPQPQPQPPPPPPGPG. 5 disordered regions span residues 1 to 47, 164 to 197, 215 to 288, 301 to 393, and 411 to 469; these read MATN…AGAG, HKEEGSGNTAPDDEKPDTSLITQGVPTPGPSANV, ASAA…CPVE, ILLN…KEDF, and VHTS…VRHA. A compositionally biased stretch (gly residues) spans 34-47; the sequence is AGPGAGGAGGAGAG. Over residues 215-227 the composition is skewed to low complexity; the sequence is ASAARASTETSNA. The segment covering 246 to 263 has biased composition (basic and acidic residues); sequence STDKERTSEDMADKEKST. Phosphoserine is present on Ser-266. Over residues 312-393 the composition is skewed to basic and acidic residues; that stretch reads SEQKNKSTDK…KTVEGTKEDF (82 aa). Residues 418 to 443 are compositionally biased toward acidic residues; that stretch reads SFEEDTEEEVVTSDSMEEGEITSDDE. Lys-473 bears the N6-acetyllysine mark. Phosphoserine is present on residues Ser-482 and Ser-484. Composition is skewed to basic and acidic residues over residues 497-527, 549-570, and 580-653; these read IAKEKEERLLRRQINREKLEEKRKQKAEKTK, LEPKAARIKEVLKERKVLEKKV, and SRNV…LERE. The tract at residues 497–1203 is disordered; it reads IAKEKEERLL…EKHADHRSTL (707 aa). Phosphoserine is present on residues Ser-635 and Ser-659. A phosphothreonine mark is found at Thr-660 and Thr-733. Composition is skewed to basic and acidic residues over residues 671 to 772, 804 to 852, 866 to 878, 940 to 966, 984 to 1021, and 1028 to 1075; these read TDTR…EENI, KDGK…KIQK, RRSESYSEDKCDM, KPDKEKNTEENDSEKQRKSKVEDKPFE, TQKDSSHRAKLPLAKEKYKSDKDSTSTRLERKLSDGHK, and SSKD…ENRR. At Ser-1077 the chain carries Phosphoserine. Composition is skewed to polar residues over residues 1092–1103 and 1135–1148; these read NTLSTPSGSSLQ and SKTQDNRNNNSQQD. 2 positions are modified to phosphoserine: Ser-1145 and Ser-1318. Residue Thr-1354 is modified to Phosphothreonine. 3 disordered regions span residues 1456–1550, 1700–1725, and 1760–1890; these read KLKH…QSEV, GSISSEEVDGSQGNMMRMGPKKETEG, and VVLG…TGLG. Basic and acidic residues predominate over residues 1465-1479; sequence KVKDISIDVERRNEN. Residues 1482 to 1504 show a composition bias toward polar residues; the sequence is VDTSAGSGSAPSVLHQRNGQTED. Residues Ser-1531, Ser-1701, and Ser-1710 each carry the phosphoserine modification. Residues Ser-2013, Ser-2025, Ser-2128, and Ser-2203 each carry the phosphoserine modification. Disordered regions lie at residues 2189-2210, 2258-2285, 2403-2447, 2472-2519, 2615-2635, and 2717-3051; these read DFEGPMPSAPPEAESPLASTSK, TSSVEDCEGPVSSAVPQEEGDPSVTPAE, STEE…FAGR, EDKS…AKDP, DQASAEKTGDDNSTRKSFPEE, and VENS…KAKR. Residues 2191-2207 show a composition bias toward low complexity; the sequence is EGPMPSAPPEAESPLAS. A compositionally biased stretch (basic and acidic residues) spans 2428–2439; it reads AEKEEKHGKECP. Position 2475 is a phosphoserine (Ser-2475). Residues 2483 to 2492 are compositionally biased toward low complexity; the sequence is GSSTASYSAG. 2 positions are modified to phosphoserine: Ser-2501 and Ser-2618. Composition is skewed to basic and acidic residues over residues 2621–2633, 2724–2746, and 2754–2767; these read KTGDDNSTRKSFP, TNEEIHSESYNKGEISSGRKDNA, and VEADPKEVEEEERH. The segment covering 2780–2789 has biased composition (acidic residues); sequence SEDEPDDNPD. The span at 2791–2822 shows a compositional bias: basic and acidic residues; sequence LDSRIETAQRQCPETEPHDTKEENSRDLEELP. Residues 2823–2834 show a composition bias toward polar residues; the sequence is KTSSETNSTTSR. Positions 2848–2864 are enriched in basic and acidic residues; sequence TGEKPEQNDDDTIKSQE. Basic residues predominate over residues 2871–2880; sequence IKRKRGRPRK. Positions 2872–2884 form a DNA-binding region, a.T hook; that stretch reads KRKRGRPRKYPVE. Positions 2896-2910 are enriched in polar residues; the sequence is DTGIVTVEQSPSSSK. Residues Ser-2905 and Ser-2907 each carry the phosphoserine modification. Residues 2944 to 2953 show a composition bias toward basic residues; sequence VRRRGRKPKR. Ser-2954 carries the phosphoserine modification. Residue Thr-2956 is modified to Phosphothreonine. 3 positions are modified to phosphoserine: Ser-2958, Ser-2964, and Ser-2973. Glycyl lysine isopeptide (Lys-Gly) (interchain with G-Cter in ubiquitin) cross-links involve residues Lys-2981 and Lys-2982. Residues 2985–2998 are compositionally biased toward acidic residues; sequence ESDEEEEEEEEDEP. A phosphoserine mark is found at Ser-2986 and Ser-3019. Residues 3000–3020 are compositionally biased toward polar residues; sequence GATTRSTTRSEAQRSKTQLSP. Residues 3039–3051 show a composition bias toward basic and acidic residues; sequence QRVEEAPVKKAKR.

The protein belongs to the BOD1 family. As to quaternary structure, interacts (via COMPASS-Shg1 domain) with SETD1A at stalled replication forks; this interaction mediates FANCD2-dependent nucleosome remodeling at reversed forks protecting them from nucleolytic degradation.

It is found in the chromosome. Component of the fork protection machinery required to protect stalled/damaged replication forks from uncontrolled DNA2-dependent resection. Acts by stabilizing RAD51 at stalled replication forks and protecting RAD51 nucleofilaments from the antirecombinogenic activities of FBH1 and BLM. Does not regulate spindle orientation. This is Biorientation of chromosomes in cell division protein 1-like 1 from Homo sapiens (Human).